A 390-amino-acid polypeptide reads, in one-letter code: Protein DDI1 homolog (390 aa).

D205 is a catalytic residue. Residues 322–344 form a disordered region; that stretch reads MHAPRHQDPATTATTASNPAAPV. Low complexity predominate over residues 330-343; the sequence is PATTATTASNPAAP.

The protein belongs to the DDI1 family.

The protein localises to the cytoplasm. With respect to regulation, inhibited by pepstatin, diazoacetyl-DL-norleucine methyl ester (DAN) and nelfinavir. Inhibited by the proteinase inhibitors lopinavir and ritonavir. Functionally, aspartic protease. The sequence is that of Protein DDI1 homolog from Leishmania major.